The following is a 339-amino-acid chain: 3-isopropylmalate dehydrogenase (339 aa).

The substrate site is built by arginine 87, arginine 97, arginine 124, and aspartate 214. Residues aspartate 214, aspartate 238, and aspartate 242 each contribute to the Mg(2+) site. An NAD(+)-binding site is contributed by 274 to 286 (GSAPDIAGQGIAD).

Belongs to the isocitrate and isopropylmalate dehydrogenases family. LeuB type 2 subfamily. As to quaternary structure, homodimer. Mg(2+) is required as a cofactor. It depends on Mn(2+) as a cofactor.

It is found in the cytoplasm. The enzyme catalyses (2R,3S)-3-isopropylmalate + NAD(+) = 4-methyl-2-oxopentanoate + CO2 + NADH. It functions in the pathway amino-acid biosynthesis; L-leucine biosynthesis; L-leucine from 3-methyl-2-oxobutanoate: step 3/4. Functionally, catalyzes the oxidation of 3-carboxy-2-hydroxy-4-methylpentanoate (3-isopropylmalate) to 3-carboxy-4-methyl-2-oxopentanoate. The product decarboxylates to 4-methyl-2 oxopentanoate. This chain is 3-isopropylmalate dehydrogenase, found in Mycobacterium marinum (strain ATCC BAA-535 / M).